A 157-amino-acid chain; its full sequence is Large ribosomal subunit protein uL15 (157 aa).

The segment at 1-56 (MRLEDIRPQPGSTRRRRRLGRGIAAGQGASCGKGMRGQKARKGGGPRPGFEGGQTP) is disordered. The span at 23 to 35 (IAAGQGASCGKGM) shows a compositional bias: gly residues.

This sequence belongs to the universal ribosomal protein uL15 family. In terms of assembly, part of the 50S ribosomal subunit.

Its function is as follows. Binds to the 23S rRNA. The sequence is that of Large ribosomal subunit protein uL15 from Synechococcus sp. (strain JA-3-3Ab) (Cyanobacteria bacterium Yellowstone A-Prime).